A 91-amino-acid polypeptide reads, in one-letter code: Putative regulatory protein Cyan7425_4125 (91 aa).

This sequence belongs to the RemA family.

This is Putative regulatory protein Cyan7425_4125 from Cyanothece sp. (strain PCC 7425 / ATCC 29141).